The chain runs to 117 residues: Protein Wnt-6 (117 aa).

S1 carries O-palmitoleoyl serine; by PORCN lipidation. An intrachain disulfide couples C83 to C98. N-linked (GlcNAc...) asparagine glycosylation occurs at N84.

The protein belongs to the Wnt family. Post-translationally, palmitoleoylation is required for efficient binding to frizzled receptors. Depalmitoleoylation leads to Wnt signaling pathway inhibition.

It localises to the secreted. It is found in the extracellular space. Its subcellular location is the extracellular matrix. In terms of biological role, ligand for members of the frizzled family of seven transmembrane receptors. Probable developmental protein. May be a signaling molecule which affects the development of discrete regions of tissues. Is likely to signal over only few cell diameters. The protein is Protein Wnt-6 (WNT-6) of Evasterias troschelii (Mottled sea star).